The sequence spans 108 residues: Sperm-egg fusion protein LLCFC1 (108 aa).

The signal sequence occupies residues 1 to 30 (MTSLGSQLHRATFLTALLLLLLLQVKGVKT). Over residues 39-49 (GDKSQKDKVSS) the composition is skewed to basic and acidic residues. The disordered stretch occupies residues 39–64 (GDKSQKDKVSSEDQGEEEYEEHFEAS).

Detected in testicular germ cells and spermatozoa (at protein level). Abundantly expressed in testis.

Its subcellular location is the secreted. Its function is as follows. Sperm protein required for fusion of sperm with the egg membrane during fertilization. The chain is Sperm-egg fusion protein LLCFC1 from Mus musculus (Mouse).